A 94-amino-acid polypeptide reads, in one-letter code: YcgL domain-containing protein VP0875 (94 aa).

The region spanning methionine 1–lysine 84 is the YcgL domain.

The protein is YcgL domain-containing protein VP0875 of Vibrio parahaemolyticus serotype O3:K6 (strain RIMD 2210633).